The following is a 219-amino-acid chain: Transcription factor MYB23 (219 aa).

HTH myb-type domains lie at 9 to 61 (EHEY…MNYL) and 62 to 116 (SPNV…SKKL). 2 consecutive DNA-binding regions (H-T-H motif) follow at residues 37–61 (WNRI…MNYL) and 89–112 (WSLI…NTHL).

Interacts with BHLH2/EGL3/MYC146, BHLH12/MYC1 and GL3. As to expression, expressed in roots, seed coats, leaves, stems and flowers. Detected specifically in trichomes, and in the cell division and differentiation zone of the root.

Its subcellular location is the nucleus. Functionally, transcription activator, when associated with BHLH2/EGL3/MYC146 or BHLH12/MYC1. Regulates the epidermal cell fate specification. Mediates the formation of columellae and accumulation of mucilages on seed coats. Controls the elongation of epidermal cells positively in roots but negatively in stems, leading to the promotion of primary roots elongation and repression of leaves and stems elongation, respectively. Ovoids ectopic root-hair formation, probably by inducing GL2 in roots. Controls trichome initiation and branching. The sequence is that of Transcription factor MYB23 (MYB23) from Arabidopsis thaliana (Mouse-ear cress).